A 64-amino-acid chain; its full sequence is Large ribosomal subunit protein bL32 (64 aa).

Residues 1–10 (MAVPKRKTTP) show a composition bias toward basic residues. The interval 1–22 (MAVPKRKTTPSKRDMRRANHDK) is disordered. Residues 11–22 (SKRDMRRANHDK) show a composition bias toward basic and acidic residues.

The protein belongs to the bacterial ribosomal protein bL32 family.

The chain is Large ribosomal subunit protein bL32 from Sorangium cellulosum (strain So ce56) (Polyangium cellulosum (strain So ce56)).